Reading from the N-terminus, the 559-residue chain is Polypeptide N-acetylgalactosaminyltransferase 1 (559 aa).

The Cytoplasmic portion of the chain corresponds to 1-8 (MRKFAYCK). Residues 9 to 28 (VVLATSLVWVLLDMFLLLYF) form a helical; Signal-anchor for type II membrane protein membrane-spanning segment. Topologically, residues 29 to 559 (SECNKCEEKK…LRNVTLPEIF (531 aa)) are lumenal. A glycan (N-linked (GlcNAc...) asparagine) is linked at Asn-95. 5 disulfide bridges follow: Cys-106–Cys-339, Cys-330–Cys-408, Cys-442–Cys-459, Cys-482–Cys-497, and Cys-523–Cys-540. Residues 115–225 (LPTTSVVIVF…VGWLEPLLAR (111 aa)) are catalytic subdomain A. Substrate is bound by residues Asp-156 and Arg-186. Mn(2+) contacts are provided by Asp-209 and His-211. Residues 285–347 (PVRTPTMAGG…TCSHVGHVFR (63 aa)) are catalytic subdomain B. Trp-316 is a binding site for substrate. His-344 lines the Mn(2+) pocket. The substrate site is built by Arg-347 and Tyr-352. The Ricin B-type lectin domain occupies 429 to 551 (FSLGEIRNVE…GSRSQQWLLR (123 aa)). Asn-552 carries an N-linked (GlcNAc...) asparagine glycan.

It belongs to the glycosyltransferase 2 family. GalNAc-T subfamily. The cofactor is Mn(2+). Heart, brain, spleen, liver, skeletal muscle and kidney.

The protein resides in the golgi apparatus. It localises to the golgi stack membrane. The protein localises to the secreted. It catalyses the reaction L-seryl-[protein] + UDP-N-acetyl-alpha-D-galactosamine = a 3-O-[N-acetyl-alpha-D-galactosaminyl]-L-seryl-[protein] + UDP + H(+). It carries out the reaction L-threonyl-[protein] + UDP-N-acetyl-alpha-D-galactosamine = a 3-O-[N-acetyl-alpha-D-galactosaminyl]-L-threonyl-[protein] + UDP + H(+). The protein operates within protein modification; protein glycosylation. Its function is as follows. Catalyzes the initial reaction in O-linked oligosaccharide biosynthesis, the transfer of an N-acetyl-D-galactosamine residue to a serine or threonine residue on the protein receptor. Has a broad spectrum of substrates such as apomucin-, MUC5AC-, MUC1- and MUC2-derived peptides. In Rattus norvegicus (Rat), this protein is Polypeptide N-acetylgalactosaminyltransferase 1.